A 116-amino-acid polypeptide reads, in one-letter code: Large ribosomal subunit protein uL18 (116 aa).

The protein belongs to the universal ribosomal protein uL18 family. Part of the 50S ribosomal subunit; part of the 5S rRNA/L5/L18/L25 subcomplex. Contacts the 5S and 23S rRNAs.

This is one of the proteins that bind and probably mediate the attachment of the 5S RNA into the large ribosomal subunit, where it forms part of the central protuberance. The chain is Large ribosomal subunit protein uL18 from Novosphingobium aromaticivorans (strain ATCC 700278 / DSM 12444 / CCUG 56034 / CIP 105152 / NBRC 16084 / F199).